Reading from the N-terminus, the 738-residue chain is Glycogen [starch] synthase, muscle (738 aa).

Ser-8 is modified (phosphoserine; by AMPK and PKA). At Ser-11 the chain carries Phosphoserine. Lys-39 contacts UDP. His-205 and Arg-211 together coordinate UDP-alpha-D-glucose. 5 residues coordinate alpha-D-glucose 6-phosphate: His-291, Glu-292, Gln-294, His-297, and Lys-301. Residue Arg-331 coordinates UDP. Arg-331 serves as a coordination point for UDP-alpha-D-glucose. Ser-412 is modified (phosphoserine). Alpha-D-glucose 6-phosphate is bound at residue His-501. Residues Glu-510, Trp-512, and Gly-513 each contribute to the UDP-alpha-D-glucose site. Thr-515 contacts UDP. Positions 582 and 586 each coordinate alpha-D-glucose 6-phosphate. Residues 632-738 are disordered; sequence QGYRYPRPAS…PTSSLGEERN (107 aa). A phosphoserine mark is found at Ser-641 and Ser-645. Position 649 is a phosphoserine; by GSK3-alpha and GSK3-beta (Ser-649). Ser-652, Ser-653, Ser-657, and Ser-672 each carry phosphoserine. The span at 682 to 695 shows a compositional bias: basic and acidic residues; the sequence is AKDRRNIRAPEWPR. Phosphoserine is present on residues Ser-698, Ser-709, and Ser-711. The span at 698 to 738 shows a compositional bias: low complexity; sequence SCSSSTGGSKRSNSVDTGPSSSLSTPTEPLSPTSSLGEERN. Thr-722 is modified (phosphothreonine). Phosphoserine is present on residues Ser-728 and Ser-732.

Belongs to the glycosyltransferase 3 family. As to quaternary structure, part of the GYS1-GYG1 complex, a heterooctamer composed of a tetramer of GYS1 and 2 dimers of GYG1, where each GYS1 protomer binds to one GYG1 subunit (via GYG1 C-terminus); the GYS1 tetramer may dissociate from GYG1 dimers to continue glycogen polymerization on its own. Post-translationally, phosphorylation at Ser-8 by AMPK inactivates the enzyme activity. Primed phosphorylation at Ser-657 (site 5) by CSNK2A1 and CSNK2A2 is required for inhibitory phosphorylation at Ser-641 (site 3a), Ser-645 (site 3b), Ser-649 (site 3c) and Ser-653 (site 4) by GSK3A an GSK3B. Phosphorylated at Ser-641 by PASK, leading to inactivation; phosphorylation by PASK is inhibited by glycogen. Phosphorylated at Ser-641 by DYRK2, leading to inactivation. Dephosphorylation at Ser-641 and Ser-645 by PP1 activates the enzyme.

It carries out the reaction [(1-&gt;4)-alpha-D-glucosyl](n) + UDP-alpha-D-glucose = [(1-&gt;4)-alpha-D-glucosyl](n+1) + UDP + H(+). Its pathway is glycan biosynthesis; glycogen biosynthesis. With respect to regulation, allosteric activation by glucose-6-phosphate. Phosphorylation reduces the activity towards UDP-glucose. When in the non-phosphorylated state, glycogen synthase does not require glucose-6-phosphate as an allosteric activator; when phosphorylated it does. Functionally, glycogen synthase participates in the glycogen biosynthetic process along with glycogenin and glycogen branching enzyme. Extends the primer composed of a few glucose units formed by glycogenin by adding new glucose units to it. In this context, glycogen synthase transfers the glycosyl residue from UDP-Glc to the non-reducing end of alpha-1,4-glucan. The chain is Glycogen [starch] synthase, muscle (Gys1) from Rattus norvegicus (Rat).